Here is a 20-residue protein sequence, read N- to C-terminus: Apidaecin 1+ (20 aa).

A disordered region spans residues 1-20; it reads GKPNRPRPAPIQPRPPHPRL.

It belongs to the apidaecin family.

Its subcellular location is the secreted. Antimicrobial peptide active against many Gram-negative enterobacterial and plant-associated bacterial species. Not active against other bacterial species like H.pylori, P.mirabilis, B.pertussis or N.gonorrhoeae. In terms of biological role, among others, also active against C.jejuni and L.pneumophila but not against Y.enterocolitica. Functionally, among others, also active against Y.enterocolitica butnot against L.pneumophila and C.jejuni. This chain is Apidaecin 1+, found in Pimpla disparis (Parasitic wasp).